Consider the following 264-residue polypeptide: Small ribosomal subunit protein uS2 (264 aa).

The tract at residues 228 to 264 is disordered; that stretch reads VDTSATVDEEEAEVAEETESMESAEDLDADLIEEEAE. Residues 234-264 show a composition bias toward acidic residues; it reads VDEEEAEVAEETESMESAEDLDADLIEEEAE.

This sequence belongs to the universal ribosomal protein uS2 family.

The chain is Small ribosomal subunit protein uS2 from Symbiobacterium thermophilum (strain DSM 24528 / JCM 14929 / IAM 14863 / T).